Reading from the N-terminus, the 158-residue chain is U4/U6.U5 small nuclear ribonucleoprotein 27 kDa protein (158 aa).

The disordered stretch occupies residues methionine 1 to glutamate 102. Basic residues predominate over residues arginine 13–serine 59. The segment covering arginine 66–glutamate 101 has biased composition (basic and acidic residues).

Belongs to the SNUT3 family. In terms of assembly, part of a tri-snRNP complex.

It is found in the nucleus. Its function is as follows. May play a role in mRNA splicing. In Xenopus laevis (African clawed frog), this protein is U4/U6.U5 small nuclear ribonucleoprotein 27 kDa protein (snrnp27).